The sequence spans 357 residues: Protein Wnt-9b (357 aa).

A signal peptide spans 1–22 (MRPPPALALAGLCLLALPAAAA). Intrachain disulfides connect C89–C100, C135–C143, C145–C162, C210–C224, C212–C219, C291–C316, C305–C311, C315–C355, C331–C346, C333–C343, and C338–C339. N99 carries N-linked (GlcNAc...) asparagine glycosylation. A lipid anchor (O-palmitoleoyl serine; by PORCN) is attached at S216.

This sequence belongs to the Wnt family. As to quaternary structure, forms a soluble 1:1 complex with AFM; this prevents oligomerization and is required for prolonged biological activity. The complex with AFM may represent the physiological form in body fluids. Component of the Wnt-Fzd-LRP5-LRP6 signaling complex that contains a WNT protein, a FZD protein and LRP5 or LRP6. Interacts directly in the complex with LRP6. Interacts with PKD1 (via extracellular domain). In terms of processing, palmitoleoylation is required for efficient binding to frizzled receptors. Depalmitoleoylation leads to Wnt signaling pathway inhibition. Moderately expressed in fetal kidney and adult kidney. Also found in brain.

It is found in the secreted. The protein localises to the extracellular space. Its subcellular location is the extracellular matrix. Its function is as follows. Ligand for members of the frizzled family of seven transmembrane receptors. Functions in the canonical Wnt/beta-catenin signaling pathway. Required for normal embryonic kidney development, and for normal development of the urogenital tract, including uterus and part of the oviduct and the upper vagina in females, and epididymis and vas deferens in males. Activates a signaling cascade in the metanephric mesenchyme that induces tubulogenesis. Acts upstream of WNT4 in the signaling pathways that mediate development of kidney tubules and the Muellerian ducts. Plays a role in cranofacial development and is required for normal fusion of the palate during embryonic development. The chain is Protein Wnt-9b (WNT9B) from Homo sapiens (Human).